Here is a 250-residue protein sequence, read N- to C-terminus: 5'-nucleotidase SurE (250 aa).

A divalent metal cation-binding residues include Asp8, Asp9, Ser39, and Asn91.

This sequence belongs to the SurE nucleotidase family. A divalent metal cation serves as cofactor.

The protein localises to the cytoplasm. It carries out the reaction a ribonucleoside 5'-phosphate + H2O = a ribonucleoside + phosphate. Nucleotidase that shows phosphatase activity on nucleoside 5'-monophosphates. This chain is 5'-nucleotidase SurE, found in Leptospira borgpetersenii serovar Hardjo-bovis (strain JB197).